Consider the following 568-residue polypeptide: Acetate--CoA ligase CCL3 (568 aa).

Residues 204-212, 340-345, Asp437, 449-452, and Lys547 each bind ATP; these read TSGTTASPK, HTYGLS, and IKDR. Positions 272 to 340 are SBD1; sequence TAKGVYSAIA…MSEKGFKVAH (69 aa). Positions 341 to 417 are SBD2; it reads TYGLSETYGP…MRGNAVMKGY (77 aa).

Belongs to the ATP-dependent AMP-binding enzyme family. As to expression, mostly expressed in glandular trichomes (lupulin glands) after flowering and in old leaves, and, to a lower extent, in stems, young leaves, cones and flowers.

It localises to the cytoplasm. Its subcellular location is the cytosol. It catalyses the reaction acetate + ATP + CoA = acetyl-CoA + AMP + diphosphate. The catalysed reaction is propanoate + ATP + CoA = propanoyl-CoA + AMP + diphosphate. It carries out the reaction butanoate + ATP + CoA = butanoyl-CoA + AMP + diphosphate. The enzyme catalyses 3-methylbutanoate + ATP + CoA = 3-methylbutanoyl-CoA + AMP + diphosphate. It catalyses the reaction pentanoate + ATP + CoA = pentanoyl-CoA + AMP + diphosphate. The catalysed reaction is hexanoate + ATP + CoA = hexanoyl-CoA + AMP + diphosphate. It carries out the reaction 2-methylpropanoate + ATP + CoA = 2-methylpropanoyl-CoA + AMP + diphosphate. The enzyme catalyses 2-methylbutanoate + ATP + CoA = 2-methylbutanoyl-CoA + AMP + diphosphate. It catalyses the reaction 2-methylpentanoate + ATP + CoA = 2-methylpentanoyl-CoA + AMP + diphosphate. The catalysed reaction is 3-methylpentanoate + ATP + CoA = 3-methylpentanoyl-CoA + AMP + diphosphate. It carries out the reaction 4-methylpentanoate + ATP + CoA = 4-methylpentanoyl-CoA + AMP + diphosphate. It participates in secondary metabolite biosynthesis. Involved in the biosynthesis of prenylated phenolics natural products which contribute to the bitter taste of beer and display broad biological activities. Catalyzes the ligation of CoA on propanoate to produce propanoyl-CoA. Can also use 2-methylpropanoate (isobutyric acid), acetate, butanoate, isovalerate, pentanoate, hexanoate, 2-methylbutanoate, 2-methylpentanoate, 3-methylpentanoate and 4-methylpentanoate as substrates with a lower efficiency. Triggers the formation of very short chain acyl-CoAs from the corresponding fatty acids, including acetic acid, propanoic acid, butyric acid and its isomer. The sequence is that of Acetate--CoA ligase CCL3 from Humulus lupulus (European hop).